The primary structure comprises 361 residues: Glycerophosphodiester phosphodiesterase GDPD1, chloroplastic (361 aa).

Residues 1 to 53 constitute a chloroplast transit peptide; the sequence is MSLKAIHVSEVPSLDHFPENPSLICSSRKANNKFVVVGHRGHGMNMSQSPDLR. Positions 54 to 323 constitute a GP-PDE domain; it reads FSALKENSIL…DHVEEITEAV (270 aa).

This sequence belongs to the glycerophosphoryl diester phosphodiesterase family. The cofactor is Mg(2+). Expressed in roots, shoots, rosette leaves, stems, flowers and siliques.

The protein resides in the plastid. The protein localises to the chloroplast. The catalysed reaction is a sn-glycero-3-phosphodiester + H2O = an alcohol + sn-glycerol 3-phosphate + H(+). In terms of biological role, hydrolyzes glycerolphosphoglycerol, glycerophosphocholine and glycerophosphoethanolamine in vitro. May be involved in release of inorganic phosphate (Pi) from phospholipids during Pi starvation. In Arabidopsis thaliana (Mouse-ear cress), this protein is Glycerophosphodiester phosphodiesterase GDPD1, chloroplastic.